Here is a 462-residue protein sequence, read N- to C-terminus: UDP-N-acetylmuramoylalanine--D-glutamate ligase (462 aa).

111-117 contributes to the ATP binding site; the sequence is GTNGKTT.

Belongs to the MurCDEF family.

It localises to the cytoplasm. The enzyme catalyses UDP-N-acetyl-alpha-D-muramoyl-L-alanine + D-glutamate + ATP = UDP-N-acetyl-alpha-D-muramoyl-L-alanyl-D-glutamate + ADP + phosphate + H(+). It functions in the pathway cell wall biogenesis; peptidoglycan biosynthesis. In terms of biological role, cell wall formation. Catalyzes the addition of glutamate to the nucleotide precursor UDP-N-acetylmuramoyl-L-alanine (UMA). The polypeptide is UDP-N-acetylmuramoylalanine--D-glutamate ligase (Trichodesmium erythraeum (strain IMS101)).